Here is a 145-residue protein sequence, read N- to C-terminus: Superoxide dismutase [Cu-Zn] (145 aa).

Cu cation contacts are provided by histidine 37, histidine 39, and histidine 54. Cysteine 48 and cysteine 137 form a disulfide bridge. Zn(2+) contacts are provided by histidine 54, histidine 62, histidine 71, and aspartate 74. Histidine 111 contacts Cu cation.

This sequence belongs to the Cu-Zn superoxide dismutase family. Homodimer. It depends on Cu cation as a cofactor. Zn(2+) serves as cofactor.

The protein localises to the cytoplasm. It catalyses the reaction 2 superoxide + 2 H(+) = H2O2 + O2. Destroys radicals which are normally produced within the cells and which are toxic to biological systems. The sequence is that of Superoxide dismutase [Cu-Zn] from Drosophila busckii (Fruit fly).